The primary structure comprises 137 residues: Putative FERT-1 protein (137 aa).

The sequence is that of Putative FERT-1 protein (FERT-1) from Ascaris suum (Pig roundworm).